A 323-amino-acid chain; its full sequence is Mas-related G-protein coupled receptor member B4 (323 aa).

Residues 1-34 (MSPTTQAWSINNTVVKENYYTEILSCITTFNTLN) are Extracellular-facing. Residue asparagine 11 is glycosylated (N-linked (GlcNAc...) asparagine). The helical transmembrane segment at 35-55 (FLIVIISVVGMAGNATVLWLL) threads the bilayer. The Cytoplasmic portion of the chain corresponds to 56–63 (GFHMHRNA). Residues 64–84 (FSVYVLNLAGADFLYLCAQTV) form a helical membrane-spanning segment. The Extracellular segment spans residues 85–98 (YSLECVLQFDNSYF). A helical membrane pass occupies residues 99-119 (YFLLTILMFNYLAGFCMIAAI). Residues 120–147 (STERCLSVTWPIWYHCQRPRHTSATVCA) lie on the Cytoplasmic side of the membrane. Residues 148–168 (LFWAFSLLLSLLLGQGCGFLF) traverse the membrane as a helical segment. At 169-180 (SKFDYSFCRYCN) the chain is on the extracellular side. A helical transmembrane segment spans residues 181–201 (FIATAFLIVIFMVLFVSSLAL). At 202 to 224 (LAKIICGSHRIPVTRFYVTIALT) the chain is on the cytoplasmic side. Residues 225-245 (VLVFIFFGLPIGICVFLLPWI) form a helical membrane-spanning segment. Residues 246 to 255 (HMMLSSFFYE) lie on the Extracellular side of the membrane. The chain crosses the membrane as a helical span at residues 256–276 (MVTLLSCVNSCANPIIYFFVG). At 277–323 (SIRHHRLQRQTLKLLLQRAMQDTPEEEGGERGPSQKSEDLEVVRCSS) the chain is on the cytoplasmic side. A disordered region spans residues 298 to 323 (DTPEEEGGERGPSQKSEDLEVVRCSS). Positions 312 to 323 (KSEDLEVVRCSS) are enriched in basic and acidic residues.

The protein belongs to the G-protein coupled receptor 1 family. Mas subfamily. In terms of tissue distribution, expressed strongly in newborn dorsal root ganglia, adult dorsal root ganglia and trigeminal ganlia.

The protein localises to the membrane. In terms of biological role, orphan receptor. Probably involved in the function of nociceptive neurons. May regulate nociceptor function and/or development, including the sensation or modulation of pain. This Rattus norvegicus (Rat) protein is Mas-related G-protein coupled receptor member B4 (Mrgprb4).